The chain runs to 105 residues: Small ribosomal subunit protein uS10 (105 aa).

The protein belongs to the universal ribosomal protein uS10 family. In terms of assembly, part of the 30S ribosomal subunit.

Functionally, involved in the binding of tRNA to the ribosomes. The sequence is that of Small ribosomal subunit protein uS10 from Roseobacter denitrificans (strain ATCC 33942 / OCh 114) (Erythrobacter sp. (strain OCh 114)).